Reading from the N-terminus, the 284-residue chain is 4-diphosphocytidyl-2-C-methyl-D-erythritol kinase (284 aa).

Lys14 is an active-site residue. Residue 98 to 108 (PMGGGLGGGSS) participates in ATP binding. Asp140 is an active-site residue.

It belongs to the GHMP kinase family. IspE subfamily.

It carries out the reaction 4-CDP-2-C-methyl-D-erythritol + ATP = 4-CDP-2-C-methyl-D-erythritol 2-phosphate + ADP + H(+). The protein operates within isoprenoid biosynthesis; isopentenyl diphosphate biosynthesis via DXP pathway; isopentenyl diphosphate from 1-deoxy-D-xylulose 5-phosphate: step 3/6. Its function is as follows. Catalyzes the phosphorylation of the position 2 hydroxy group of 4-diphosphocytidyl-2C-methyl-D-erythritol. The protein is 4-diphosphocytidyl-2-C-methyl-D-erythritol kinase of Shewanella baltica (strain OS185).